The primary structure comprises 265 residues: MVFGQLYALFIFTLSCCISKTVQADSSKESSSFISFDKESNWDTISTISSTADVISSVDSAIAVFEFDNFSLLDNLMIDEEYPFFNRFFANDVSLTVHDDSPLNISQSLSPIMEQFTVDELPESASDLLYEYSLDDKSIVLFKFTSDAYDLKKLDEFIDSCLSFLEDKSGDNLTVVINSLGWAFEDEDGDDEYATEETLSHHDNNKGKEGDDDILSSIWTEGLLMCLIVSALLLFILIVALSWISNLDITYGALEKSTNPIKKNN.

An N-terminal signal peptide occupies residues 1-24 (MVFGQLYALFIFTLSCCISKTVQA). The Vacuolar portion of the chain corresponds to 25–223 (DSSKESSSFI…ILSSIWTEGL (199 aa)). Residues asparagine 69, asparagine 104, and asparagine 172 are each glycosylated (N-linked (GlcNAc...) asparagine). Residues 224-244 (LMCLIVSALLLFILIVALSWI) form a helical membrane-spanning segment. Residues 245-265 (SNLDITYGALEKSTNPIKKNN) are Cytoplasmic-facing. Residues 262–265 (KKNN) carry the ER retention motif motif.

Belongs to the VOA1 family. V-ATPase is a heteromultimeric enzyme composed of a peripheral catalytic V1 complex (components A to H) attached to an integral membrane V0 proton pore complex (components: a, c, c', c'', d, e, f and VOA1). Interacts with VMA21. Associates with the assembling V0 complex.

The protein localises to the vacuole membrane. The protein resides in the endoplasmic reticulum membrane. Accessory component of the V0 complex of vacuolar(H+)-ATPase (V-ATPase), a multisubunit enzyme composed of a peripheral complex (V1) that hydrolyzes ATP and a membrane integral complex (V0) that translocates protons. V-ATPase is responsible for acidifying and maintaining the pH of intracellular compartments. Functions with VMA21 in assembly of the V0 complex. This is V0 assembly protein 1 (VOA1) from Saccharomyces cerevisiae (strain ATCC 204508 / S288c) (Baker's yeast).